A 161-amino-acid chain; its full sequence is Large ribosomal subunit protein uL15 (161 aa).

The segment at 1–50 is disordered; it reads MKLSDIADNAGSRKKRMRIGRGIGSGKGKTGGRGGKGQTARSGVRINGFE. The segment covering 21 to 37 has biased composition (gly residues); it reads RGIGSGKGKTGGRGGKG.

It belongs to the universal ribosomal protein uL15 family. As to quaternary structure, part of the 50S ribosomal subunit.

Functionally, binds to the 23S rRNA. This is Large ribosomal subunit protein uL15 from Nitrobacter winogradskyi (strain ATCC 25391 / DSM 10237 / CIP 104748 / NCIMB 11846 / Nb-255).